The primary structure comprises 96 residues: Small ribosomal subunit protein bS6c (96 aa).

It belongs to the bacterial ribosomal protein bS6 family.

The protein localises to the plastid. It localises to the chloroplast. In terms of biological role, binds together with bS18 to 16S ribosomal RNA. The polypeptide is Small ribosomal subunit protein bS6c (rps6) (Guillardia theta (Cryptophyte)).